Reading from the N-terminus, the 48-residue chain is Toxin CSTX-14 (48 aa).

Intrachain disulfides connect C3–C18, C10–C27, C17–C42, and C29–C40.

Belongs to the neurotoxin 19 (CSTX) family. 12 subfamily. Heterodimer of A and B chains; disulfide-linked. In terms of processing, contains 4 disulfide bonds. As to expression, expressed by the venom gland.

It localises to the secreted. This is Toxin CSTX-14 from Cupiennius salei (American wandering spider).